Reading from the N-terminus, the 410-residue chain is Ribulose bisphosphate carboxylase large chain (410 aa).

Residues asparagine 100 and threonine 150 each contribute to the substrate site. Lysine 152 (proton acceptor) is an active-site residue. Lysine 154 lines the substrate pocket. The Mg(2+) site is built by lysine 178, aspartate 180, and glutamate 181. At lysine 178 the chain carries N6-carboxylysine. The Proton acceptor role is filled by histidine 271. Substrate is bound by residues arginine 272, histidine 304, and serine 356.

The protein belongs to the RuBisCO large chain family. Type I subfamily. In terms of assembly, heterohexadecamer of 8 large chains and 8 small chains; disulfide-linked. The disulfide link is formed within the large subunit homodimers. The cofactor is Mg(2+). In terms of processing, the disulfide bond which can form in the large chain dimeric partners within the hexadecamer appears to be associated with oxidative stress and protein turnover.

It is found in the plastid. It localises to the chloroplast. The catalysed reaction is 2 (2R)-3-phosphoglycerate + 2 H(+) = D-ribulose 1,5-bisphosphate + CO2 + H2O. The enzyme catalyses D-ribulose 1,5-bisphosphate + O2 = 2-phosphoglycolate + (2R)-3-phosphoglycerate + 2 H(+). In terms of biological role, ruBisCO catalyzes two reactions: the carboxylation of D-ribulose 1,5-bisphosphate, the primary event in carbon dioxide fixation, as well as the oxidative fragmentation of the pentose substrate in the photorespiration process. Both reactions occur simultaneously and in competition at the same active site. This Gleichenia japonica (Urajiro) protein is Ribulose bisphosphate carboxylase large chain (rbcL).